We begin with the raw amino-acid sequence, 360 residues long: MSRVYNFSAGPAAIPEEVLFTVRDELLDWHGIGMSIAEVSHRGEEFIGVAEEAERDLRELLAVPESYHILFLQGGSRLQFAMVPMNLLANHKKAVYIDSGVWSNLAIREAKNYCDPHLATNAKELNYTGIPDQATWDMPNEAAYFYYVDNETVNGIEFPFIPDTHLTLVCDMSSNLLSRPFDVSRYGLIFACAQKNMGLAGLTIVIVHDDLLKRSPLPTTPSYLQYALHAKERSFINTPPTFAWYLAGLIFKWVKNQGGVAVLAERNQRKAAKLYKFIDKSNFFDNPINPTYRSRMNVIFRLADERLNSLFLKEATENGLANLKGHRLLGGMRASIYNAMTEEGVDALINFMGQFEKRHG.

Residue R42 participates in L-glutamate binding. Pyridoxal 5'-phosphate is bound by residues W102, T152, D171, and Q194. Position 195 is an N6-(pyridoxal phosphate)lysine (K195). A pyridoxal 5'-phosphate-binding site is contributed by 237–238 (NT).

The protein belongs to the class-V pyridoxal-phosphate-dependent aminotransferase family. SerC subfamily. Homodimer. Pyridoxal 5'-phosphate is required as a cofactor.

The protein localises to the cytoplasm. The enzyme catalyses O-phospho-L-serine + 2-oxoglutarate = 3-phosphooxypyruvate + L-glutamate. The catalysed reaction is 4-(phosphooxy)-L-threonine + 2-oxoglutarate = (R)-3-hydroxy-2-oxo-4-phosphooxybutanoate + L-glutamate. It participates in amino-acid biosynthesis; L-serine biosynthesis; L-serine from 3-phospho-D-glycerate: step 2/3. The protein operates within cofactor biosynthesis; pyridoxine 5'-phosphate biosynthesis; pyridoxine 5'-phosphate from D-erythrose 4-phosphate: step 3/5. Its function is as follows. Catalyzes the reversible conversion of 3-phosphohydroxypyruvate to phosphoserine and of 3-hydroxy-2-oxo-4-phosphonooxybutanoate to phosphohydroxythreonine. The protein is Phosphoserine aminotransferase of Coxiella burnetii (strain CbuK_Q154) (Coxiella burnetii (strain Q154)).